A 280-amino-acid polypeptide reads, in one-letter code: Bis(5'-nucleosyl)-tetraphosphatase, symmetrical (280 aa).

This sequence belongs to the Ap4A hydrolase family.

It carries out the reaction P(1),P(4)-bis(5'-adenosyl) tetraphosphate + H2O = 2 ADP + 2 H(+). Functionally, hydrolyzes diadenosine 5',5'''-P1,P4-tetraphosphate to yield ADP. This chain is Bis(5'-nucleosyl)-tetraphosphatase, symmetrical, found in Paracidovorax citrulli (strain AAC00-1) (Acidovorax citrulli).